Here is a 571-residue protein sequence, read N- to C-terminus: Kinesin light chain (571 aa).

A coiled-coil region spans residues 54 to 160; the sequence is LLTSMKTIRK…KKHLEFMNEM (107 aa). A compositionally biased stretch (basic and acidic residues) spans 167-177; that stretch reads EAQVNEEKESE. Positions 167 to 210 are disordered; the sequence is EAQVNEEKESEQSSLDLGFPDDDDDGGQPEVLSPTQPSAMAQAA. TPR repeat units lie at residues 220–253, 262–295, 304–337, 346–379, 388–421, and 471–504; these read LRTL…LEKT, ATML…REKT, AATL…REKV, AKQL…YQKE, AKTK…AHEK, and TTTL…RKSA. Residues 518-571 are disordered; it reads GSDFSKGQSPKDRKRSNSRDRNRRDSMDSVSYEKSGDGDEHEKSKLHVGTSHKQ. Basic and acidic residues-rich tracts occupy residues 526-544 and 551-562; these read SPKD…RDSM and KSGDGDEHEKSK.

The protein belongs to the kinesin light chain family. Oligomeric complex composed of two heavy chains and two light chains.

The protein localises to the cytoplasm. Its subcellular location is the cytoskeleton. Functionally, kinesin is a microtubule-associated force-producing protein that may play a role in organelle transport. The light chain may function in coupling of cargo to the heavy chain or in the modulation of its ATPase activity. The sequence is that of Kinesin light chain from Doryteuthis pealeii (Longfin inshore squid).